An 815-amino-acid chain; its full sequence is MADDRQLVDEISAATTLELPVLPLINTVLFPTMVTPLFVARELSMAAIEAAMSADRQIVAVAQRAIEIEEHDTSQLYQVGVIAHIERVLKLPDGTTSVLVQGQQRVQIVDWLATEPYINAQVQIIEPDHESSLAIEAMMRGVLASYEKVVKLSRTMPDDAYVAALNLEDASALADLIASTLPLDIVRRQQLLELFEVEERLRRLSVVLSQEIDVLELEHHIQNQVQKEVDKSQRDFFLREQLKAIQTELGQEDPLTRELNELHDRIVAANLPAKAQAKALEELGRLEMMPPAAPEYSVIRTYLDWLLELPWSKTSADVADLEVAAKVLENNHYGLKKVKERILEFIAVRMLAGDSTKSPILCFVGPPGVGKTSLGRSVAEALGREFVRLSLGGVHDEAEIRGHRRTYIGAMPGRIIQTMKDAGTINPVFMLDEIDKLGNDFRGDPAAALLEVLDPEQNNTFADHYLDLPYDLSKIMFITTANMLDPIDEPLLDRMEIVELPGYIEEEKVQIARKFLIPKQIEANGLKQHPITISDEALRQIIRTYTWEAGVRNLEREIGGICRKIARRVAEKKRYPRRITPTMLTDFLGQPPFDYSRANDRDEIGVATGMVWSSNGGDVVAIETAIVDGKGTTTLTGQLGDVMQESAQAALSYARASSRRLGIDGKRFEKIDIHIHVPEGGVPKDGPSAGITLACSVISALTHRPLRRDVAMTGEITLRGRVLPIGGLRDKILGAYRAGITTMLIPKKNLRDLEEVPNNVRRQITVVAVEHMDEVLPIAFVSNPLERGSQHTSDGDQTSVVLPTITQPQLGSVEL.

In terms of domain architecture, Lon N-terminal spans 19 to 212 (LPVLPLINTV…RLSVVLSQEI (194 aa)). 365-372 (GPPGVGKT) is an ATP binding site. One can recognise a Lon proteolytic domain in the interval 601 to 782 (RDEIGVATGM…DEVLPIAFVS (182 aa)). Active-site residues include serine 688 and lysine 731.

It belongs to the peptidase S16 family. Homohexamer. Organized in a ring with a central cavity.

The protein resides in the cytoplasm. It carries out the reaction Hydrolysis of proteins in presence of ATP.. Functionally, ATP-dependent serine protease that mediates the selective degradation of mutant and abnormal proteins as well as certain short-lived regulatory proteins. Required for cellular homeostasis and for survival from DNA damage and developmental changes induced by stress. Degrades polypeptides processively to yield small peptide fragments that are 5 to 10 amino acids long. Binds to DNA in a double-stranded, site-specific manner. This is Lon protease 2 from Herpetosiphon aurantiacus (strain ATCC 23779 / DSM 785 / 114-95).